A 440-amino-acid polypeptide reads, in one-letter code: Tuliposide B-converting enzyme 1, amyloplastic (440 aa).

The transit peptide at 1–58 (MSIVSFCSSLPAGPHGFKHGRGTRDMVHMPCIVRRTARSPAQACRLLRWNKYHCAAVP) directs the protein to the amyloplast. Ser232 serves as the catalytic Acyl-ester intermediate. Residues Asp325 and His357 each act as charge relay system in the active site.

Belongs to the AB hydrolase superfamily. In terms of assembly, homodimer. Not glycosylated. Expressed in the pollen grains.

The protein resides in the plastid. The protein localises to the amyloplast. It carries out the reaction 6-tuliposide B = tulipalin B + D-glucose. Its activity is regulated as follows. Inhibited by Ag(+), Cu(2+), Fe(2+), Hg(2+), V(3+) and phenylmethylsulfonyl fluoride (PMSF). In terms of biological role, lactone-forming carboxylesterase, specifically catalyzing intramolecular transesterification, but not hydrolysis. Involved in the biosynthesis of tulipalins, defensive chemicals that show antimicrobial activities against a broad range of strains of bacteria and fungi. Substrates are 6-tuliposide B &gt; 6-tuliposide A. The protein is Tuliposide B-converting enzyme 1, amyloplastic of Tulipa gesneriana (Garden tulip).